We begin with the raw amino-acid sequence, 190 residues long: Potassium-transporting ATPase KdpC subunit (190 aa).

The helical transmembrane segment at 10–30 (TFLFLLLITGGVYPLLTTALG) threads the bilayer.

Belongs to the KdpC family. As to quaternary structure, the system is composed of three essential subunits: KdpA, KdpB and KdpC.

Its subcellular location is the cell inner membrane. Its function is as follows. Part of the high-affinity ATP-driven potassium transport (or Kdp) system, which catalyzes the hydrolysis of ATP coupled with the electrogenic transport of potassium into the cytoplasm. This subunit acts as a catalytic chaperone that increases the ATP-binding affinity of the ATP-hydrolyzing subunit KdpB by the formation of a transient KdpB/KdpC/ATP ternary complex. This Escherichia coli O6:H1 (strain CFT073 / ATCC 700928 / UPEC) protein is Potassium-transporting ATPase KdpC subunit.